The following is a 129-amino-acid chain: MSGRGKQGGKVRAKAKSRSSRAGLQFPVGRVHRLLRKGNYAERVGAGAPVYLAAVLEYLTAEILELAGNAARDNKKTRIIPRHLQLAIRNDEELNKLLGKVTIAQGGVLPNIQAVLLPKKTESQKAKSK.

The interval 1 to 22 is disordered; it reads MSGRGKQGGKVRAKAKSRSSRA. N6-acetyllysine is present on residues lysine 6 and lysine 10. The span at 7-19 shows a compositional bias: basic residues; that stretch reads QGGKVRAKAKSRS. Lysine 10 is subject to N6-lactoyllysine; alternate. Glutamine 105 carries the post-translational modification N5-methylglutamine. Residue threonine 121 is modified to Phosphothreonine; by DCAF1.

This sequence belongs to the histone H2A family. The nucleosome is a histone octamer containing two molecules each of H2A, H2B, H3 and H4 assembled in one H3-H4 heterotetramer and two H2A-H2B heterodimers. The octamer wraps approximately 147 bp of DNA. In terms of processing, monoubiquitination of Lys-120 (H2AXK119ub) gives a specific tag for epigenetic transcriptional repression. Following DNA double-strand breaks (DSBs), it is ubiquitinated through 'Lys-63' linkage of ubiquitin moieties. Post-translationally, glutamine methylation at Gln-105 (H2AQ104me) by FBL is specifically dedicated to polymerase I. It is present at 35S ribosomal DNA locus and impairs binding of the FACT complex. Phosphorylation on Ser-2 (H2AS1ph) is enhanced during mitosis. Phosphorylation on Ser-2 by RPS6KA5/MSK1 directly represses transcription. Acetylation of H3 inhibits Ser-2 phosphorylation by RPS6KA5/MSK1. Phosphorylation at Thr-121 (H2AT120ph) by DCAF1 is present in the regulatory region of many tumor suppresor genes and down-regulates their transcription.

It localises to the nucleus. It is found in the chromosome. In terms of biological role, core component of nucleosome. Nucleosomes wrap and compact DNA into chromatin, limiting DNA accessibility to the cellular machineries which require DNA as a template. Histones thereby play a central role in transcription regulation, DNA repair, DNA replication and chromosomal stability. DNA accessibility is regulated via a complex set of post-translational modifications of histones, also called histone code, and nucleosome remodeling. In Macaca fascicularis (Crab-eating macaque), this protein is Histone H2A.J.